The primary structure comprises 507 residues: RNA-splicing ligase RtcB homolog (507 aa).

Mn(2+) is bound by residues aspartate 121, cysteine 124, histidine 229, histidine 261, and histidine 355. Residue 228 to 232 (NHYGE) coordinates GMP. Residues 355-356 (HN), 404-407 (GGTM), serine 411, 430-433 (HGSG), and lysine 506 each bind GMP. Residue histidine 430 is the GMP-histidine intermediate of the active site.

The protein belongs to the RtcB family. As to quaternary structure, catalytic component of the tRNA-splicing ligase complex. Mn(2+) is required as a cofactor.

The enzyme catalyses a 3'-end 3'-phospho-ribonucleotide-RNA + a 5'-end dephospho-ribonucleoside-RNA + GTP = a ribonucleotidyl-ribonucleotide-RNA + GMP + diphosphate. The catalysed reaction is a 3'-end 2',3'-cyclophospho-ribonucleotide-RNA + a 5'-end dephospho-ribonucleoside-RNA + GTP + H2O = a ribonucleotidyl-ribonucleotide-RNA + GMP + diphosphate + H(+). Its function is as follows. Catalytic subunit of the tRNA-splicing ligase complex that acts by directly joining spliced tRNA halves to mature-sized tRNAs by incorporating the precursor-derived splice junction phosphate into the mature tRNA as a canonical 3',5'-phosphodiester. May act as an RNA ligase with broad substrate specificity, and may function toward other RNAs. In Theileria parva (East coast fever infection agent), this protein is RNA-splicing ligase RtcB homolog.